Here is a 444-residue protein sequence, read N- to C-terminus: MARTRNRLDRTPFQTAVTDLSHDGRGVARRDGEGGKVTFISGALPGELVRAEPTARSRHFDEAKTVEVLEASPQRVTPRCPHFGVCAGCVLQHLEESQQIVAKQRVLMDNLERIGHVTPQAVLPALTGDNWGYRRKGRFSVRRVEKKDKTLVGFRELDPRFVADLSICYTVIPQIGEKIPLFAALIEGMDGKRDIPQIEFIAGDDAVALTIRHMQPLSERDRQAWVAFAQEHGFAIFLQPGGVDSVHPLWPQDVPLSFRLPQWEVELAFRPLDFIQVNASLNQKMIAHAVALLEAKPDDRVLDLFCGLGNFTLPLARVVREVVGVEGDAGLVARAKENAQRNGLDNAQFHAADLTQDQRSAPWMRQGFDKLLLDPPRSGALEVLQQLPLKTFDRIVYVSCHPGSLARDAGYLVNDQGFTLVCAGAMDMFPHTAHVESIAVFERR.

The TRAM domain occupies 5 to 67 (RNRLDRTPFQ…RHFDEAKTVE (63 aa)). Residues Cys80, Cys86, Cys89, and Cys168 each coordinate [4Fe-4S] cluster. Gln276, Phe305, Asn310, Glu326, Asp353, and Asp374 together coordinate S-adenosyl-L-methionine. The active-site Nucleophile is the Cys400.

The protein belongs to the class I-like SAM-binding methyltransferase superfamily. RNA M5U methyltransferase family. RlmD subfamily.

The enzyme catalyses uridine(1939) in 23S rRNA + S-adenosyl-L-methionine = 5-methyluridine(1939) in 23S rRNA + S-adenosyl-L-homocysteine + H(+). Catalyzes the formation of 5-methyl-uridine at position 1939 (m5U1939) in 23S rRNA. This is 23S rRNA (uracil(1939)-C(5))-methyltransferase RlmD from Xanthomonas euvesicatoria pv. vesicatoria (strain 85-10) (Xanthomonas campestris pv. vesicatoria).